The sequence spans 445 residues: Gasdermin-A (445 aa).

The segment at Met-1 to Gly-251 is triggers pyroptosis. Position 9-13 (Arg-9–Arg-13) interacts with a cardiolipin. Beta stranded transmembrane passes span Asn-78–Val-95, Val-99–Val-120, Val-163–Phe-179, and Leu-183–Ile-197.

The protein belongs to the gasdermin family. As to quaternary structure, homooligomer; homooligomeric ring-shaped pore complex containing 18-36 subunits when inserted in the membrane. In terms of processing, cleavage by S.pyogenes SpeB relieves autoinhibition by releasing the N-terminal moiety (Gasdermin-A, N-terminal) that initiates pyroptosis. Post-translationally, palmitoylated. In terms of tissue distribution, expressed predominantly in the gastrointestinal tract and, at a lower level, in the skin. Also detected in mammary gland. In the gastrointestinal tract, mainly expressed in differentiated cells, including the differentiated cell layer of esophagus and mucus-secreting pit cells of the gastric epithelium. Down-regulated in gastric cancer cells.

It is found in the cytoplasm. It localises to the perinuclear region. Its subcellular location is the cytosol. The protein localises to the cell membrane. With respect to regulation, the full-length protein before cleavage is inactive: intramolecular interactions between N- and C-terminal domains mediate autoinhibition in the absence of activation signal. The intrinsic pyroptosis-inducing activity is carried by the released N-terminal moiety (Gasdermin-A, N-terminal) following cleavage by S.pyogenes effector protein SpeB. In terms of biological role, this form constitutes the precursor of the pore-forming protein and acts as a sensor of infection: upon infection by S.pyogenes, specifically cleaved by S.pyogenes effector protein SpeB in epithelial cells, releasing the N-terminal moiety (Gasdermin-A, N-terminal) that binds to membranes and forms pores, triggering pyroptosis. Functionally, pore-forming protein that causes membrane permeabilization and pyroptosis. Released upon cleavage by S.pyogenes effector protein SpeB, and binds to membrane inner leaflet lipids. Homooligomerizes within the membrane and forms pores of 10-15 nanometers (nm) of inner diameter, triggering pyroptosis. Pyroptosis triggers the elimination of the infected skin cell, depriving the pathogen of its protective niche, while inducing an inflammatory response. This ultimately prevents bacterial penetration of the epithelial barrier and a subsequent systemic dissemination of the pathogen. Binds to cardiolipin and other acidic phospholipids, such as phosphatidylserine, which mediate its targeting to the inner leaflet membrane. This is Gasdermin-A from Homo sapiens (Human).